Consider the following 97-residue polypeptide: Small ribosomal subunit protein bS20 (97 aa).

Belongs to the bacterial ribosomal protein bS20 family.

In terms of biological role, binds directly to 16S ribosomal RNA. The sequence is that of Small ribosomal subunit protein bS20 from Methylibium petroleiphilum (strain ATCC BAA-1232 / LMG 22953 / PM1).